Consider the following 179-residue polypeptide: Inosine/xanthosine triphosphatase (179 aa).

Position 71 (E71) interacts with Mg(2+). 71–72 contacts substrate; sequence EA.

This sequence belongs to the YjjX NTPase family. In terms of assembly, homodimer. The cofactor is Mg(2+). It depends on Mn(2+) as a cofactor.

The enzyme catalyses XTP + H2O = XDP + phosphate + H(+). The catalysed reaction is ITP + H2O = IDP + phosphate + H(+). Functionally, phosphatase that hydrolyzes non-canonical purine nucleotides such as XTP and ITP to their respective diphosphate derivatives. Probably excludes non-canonical purines from DNA/RNA precursor pool, thus preventing their incorporation into DNA/RNA and avoiding chromosomal lesions. The sequence is that of Inosine/xanthosine triphosphatase from Shewanella oneidensis (strain ATCC 700550 / JCM 31522 / CIP 106686 / LMG 19005 / NCIMB 14063 / MR-1).